A 116-amino-acid chain; its full sequence is Ig heavy chain V-A1 region BS-5 (116 aa).

Glutamine 1 bears the Pyrrolidone carboxylic acid mark. In terms of domain architecture, Ig-like spans 1 to 107 (QSVEESGGRL…LVHLAFVDVW (107 aa)).

The protein is Ig heavy chain V-A1 region BS-5 of Oryctolagus cuniculus (Rabbit).